A 465-amino-acid polypeptide reads, in one-letter code: Fujikurins efflux protein FFUJ_12242 (465 aa).

The tract at residues 1–66 (MATNVGGAVD…AAKAHDEGPP (66 aa)) is disordered. Positions 11–28 (NSRRSISDNRHDPEKPAE) are enriched in basic and acidic residues. The next 7 helical transmembrane spans lie at 70 to 90 (TAAWMVVLGAWCCSFCSPGWI), 115 to 135 (WIPSLEIFFLFGLGPIVGIIF), 142 to 162 (PLIIGGTIFHVFGLMMASLAK), 175 to 195 (SAIGVACLYSPALACISTWFL), 200 to 220 (AAMGIMATGSSVGGVIFPIMI), 231 to 251 (WALRTAAFLILGLQVIACLTV), and 274 to 294 (PAFALLLAGIFILTYGMYIPI). Asn310 is a glycosylation site (N-linked (GlcNAc...) asparagine). 5 helical membrane passes run 314–334 (YLVAIMNAASLFGRLGAGYGA), 342–362 (MFIIACGVTGISNLAVWIPAT), 368–388 (IGYAIMFGFASGAFVSLVGAL), 404–424 (IVFLVISIPALTMAPIGGAIL), and 430–450 (GWVSLKVFAGVMCLVGSAIIL).

This sequence belongs to the major facilitator superfamily. Monocarboxylate porter (TC 2.A.1.13) family.

It localises to the cell membrane. Functionally, efflux pump that may be involved in the secretion of fujikurins. This Gibberella fujikuroi (strain CBS 195.34 / IMI 58289 / NRRL A-6831) (Bakanae and foot rot disease fungus) protein is Fujikurins efflux protein FFUJ_12242.